The sequence spans 135 residues: DNA-binding protein inhibitor ID-2-B (135 aa).

Positions A23–L75 constitute a bHLH domain. The Nuclear export signal signature appears at L108–L117.

As to quaternary structure, heterodimer with other HLH proteins.

The protein localises to the cytoplasm. It localises to the nucleus. Transcriptional regulator (lacking a basic DNA binding domain) which negatively regulates the basic helix-loop-helix (bHLH) transcription factors by forming heterodimers and inhibiting their DNA binding and transcriptional activity. Inhibits the activity of both neurogenic (neurod1/neuroD) and myogenic (myod1/myoD) bHLH factors. May play a role in the regulation of the circadian clock. The polypeptide is DNA-binding protein inhibitor ID-2-B (id2-b) (Xenopus laevis (African clawed frog)).